A 54-amino-acid chain; its full sequence is Ovomucoid (54 aa).

Residues 4 to 54 (VDCSDYPKPACLLEYMPLCGSDNKTYDNKCSFCNAVVDSNGTLSLSHFGKC) form the Kazal-like domain. 3 disulfide bridges follow: Cys6/Cys36, Cys14/Cys33, and Cys22/Cys54. N-linked (GlcNAc...) asparagine glycosylation occurs at Asn43.

The protein resides in the secreted. In Opisthocomus hoazin (Hoatzin), this protein is Ovomucoid.